We begin with the raw amino-acid sequence, 593 residues long: Aspartate--tRNA ligase (593 aa).

Glu-180 contributes to the L-aspartate binding site. Residues 204–207 (QIFK) form an aspartate region. Arg-226 contributes to the L-aspartate binding site. Residues 226 to 228 (RDE) and Gln-235 each bind ATP. His-453 lines the L-aspartate pocket. Glu-487 contacts ATP. Residue Arg-494 coordinates L-aspartate. 539 to 542 (GLDR) contacts ATP.

The protein belongs to the class-II aminoacyl-tRNA synthetase family. Type 1 subfamily. In terms of assembly, homodimer.

The protein localises to the cytoplasm. It carries out the reaction tRNA(Asp) + L-aspartate + ATP = L-aspartyl-tRNA(Asp) + AMP + diphosphate. Its function is as follows. Catalyzes the attachment of L-aspartate to tRNA(Asp) in a two-step reaction: L-aspartate is first activated by ATP to form Asp-AMP and then transferred to the acceptor end of tRNA(Asp). The polypeptide is Aspartate--tRNA ligase (Clostridium botulinum (strain Kyoto / Type A2)).